A 207-amino-acid chain; its full sequence is N-(5'-phosphoribosyl)anthranilate isomerase (207 aa).

Belongs to the TrpF family.

It carries out the reaction N-(5-phospho-beta-D-ribosyl)anthranilate = 1-(2-carboxyphenylamino)-1-deoxy-D-ribulose 5-phosphate. Its pathway is amino-acid biosynthesis; L-tryptophan biosynthesis; L-tryptophan from chorismate: step 3/5. This chain is N-(5'-phosphoribosyl)anthranilate isomerase, found in Petrotoga mobilis (strain DSM 10674 / SJ95).